The primary structure comprises 517 residues: ATP synthase subunit alpha 2 (517 aa).

Residue 173-180 (GDRQTGKT) coordinates ATP.

The protein belongs to the ATPase alpha/beta chains family. As to quaternary structure, F-type ATPases have 2 components, CF(1) - the catalytic core - and CF(0) - the membrane proton channel. CF(1) has five subunits: alpha(3), beta(3), gamma(1), delta(1), epsilon(1). CF(0) has three main subunits: a(1), b(2) and c(9-12). The alpha and beta chains form an alternating ring which encloses part of the gamma chain. CF(1) is attached to CF(0) by a central stalk formed by the gamma and epsilon chains, while a peripheral stalk is formed by the delta and b chains.

Its subcellular location is the cell inner membrane. The enzyme catalyses ATP + H2O + 4 H(+)(in) = ADP + phosphate + 5 H(+)(out). Its function is as follows. Produces ATP from ADP in the presence of a proton gradient across the membrane. The alpha chain is a regulatory subunit. The chain is ATP synthase subunit alpha 2 from Legionella pneumophila (strain Corby).